The chain runs to 417 residues: Gamma-glutamyl phosphate reductase (417 aa).

It belongs to the gamma-glutamyl phosphate reductase family.

It is found in the cytoplasm. The enzyme catalyses L-glutamate 5-semialdehyde + phosphate + NADP(+) = L-glutamyl 5-phosphate + NADPH + H(+). It participates in amino-acid biosynthesis; L-proline biosynthesis; L-glutamate 5-semialdehyde from L-glutamate: step 2/2. In terms of biological role, catalyzes the NADPH-dependent reduction of L-glutamate 5-phosphate into L-glutamate 5-semialdehyde and phosphate. The product spontaneously undergoes cyclization to form 1-pyrroline-5-carboxylate. The protein is Gamma-glutamyl phosphate reductase of Desulfitobacterium hafniense (strain Y51).